A 138-amino-acid chain; its full sequence is PilB-specific inhibitory protein CpiA (138 aa).

In terms of assembly, interacts with PilB but not with TfpB.

Functionally, acts as a PilB inhibitor to control natural transformation. Inhibits type IV pili (T4P) extension by specifically binding and inhibiting the pilus extension ATPase PilB but not TfpB. This activity probably modulates T4P extension under different environmental conditions. The polypeptide is PilB-specific inhibitory protein CpiA (Acinetobacter baylyi (strain ATCC 33305 / BD413 / ADP1)).